A 444-amino-acid chain; its full sequence is UPF0053 protein YhdP (444 aa).

One can recognise a CNNM transmembrane domain in the interval 1–201 (MDIVNLILVA…YKSGEINQSE (201 aa)). The next 3 helical transmembrane spans lie at 7 to 27 (ILVA…FAII), 61 to 81 (ACQL…ESTI), and 101 to 121 (VISF…VGEL). 2 CBS domains span residues 220–282 (MIPR…SVDS) and 284–344 (ISQF…IRDE).

Belongs to the UPF0053 family.

It is found in the cell membrane. The polypeptide is UPF0053 protein YhdP (yhdP) (Bacillus subtilis (strain 168)).